A 182-amino-acid chain; its full sequence is Ribosome-recycling factor (182 aa).

It belongs to the RRF family.

It is found in the cytoplasm. Its function is as follows. Responsible for the release of ribosomes from messenger RNA at the termination of protein biosynthesis. May increase the efficiency of translation by recycling ribosomes from one round of translation to another. The chain is Ribosome-recycling factor from Nostoc sp. (strain PCC 7120 / SAG 25.82 / UTEX 2576).